The chain runs to 257 residues: MASSLCASSAIAAISSPSFLGGKKLRLKKKLTVPAVSRPDASVRAVAADPDRPIWFPGSTPPEWLDGSLPGDFGFDPLGLSSDPDSLKWNVQAEIVHCRWAMLGAAGIFIPEFLTKIGILNTPSWYTAGEQEYFTDKTTLFVVELILIGWAEGRRWADIIKPGSVNTDPVFPNNKLTGTDVGYPGGLWFDPLGWGSGSPAKLKELRTKEIKNGRLAMLAVMGAWFQHIYTGTGPIDNLFAHLADPGHATIFAAFTPK.

Residues 1–43 (MASSLCASSAIAAISSPSFLGGKKLRLKKKLTVPAVSRPDASV) constitute a chloroplast transit peptide. Trp-55 lines the chlorophyll b pocket. Phe-75, Ser-81, and Glu-94 together coordinate chlorophyll a. Arg-99 is a chlorophyll b binding site. 2 helical membrane-spanning segments follow: residues 100 to 120 (WAML…IGIL) and 133 to 153 (YFTD…WAEG). Glu-152 and Arg-155 together coordinate chlorophyll b. Chlorophyll a-binding residues include Lys-208, Glu-209, Asn-212, Arg-214, Gln-226, and His-241. Residues 215-235 (LAMLAVMGAWFQHIYTGTGPI) form a helical membrane-spanning segment.

It belongs to the light-harvesting chlorophyll a/b-binding (LHC) protein family. The LHC complex consists of chlorophyll a-b binding proteins. Red-emitting heterodimers with LHCA3 and LHCA5. Binds to carotenoids. The cofactor is Binds at least 14 chlorophylls (8 Chl-a and 6 Chl-b) and carotenoids such as lutein and neoxanthin.. Photoregulated by reversible phosphorylation of its threonine residues.

The protein resides in the plastid. Its subcellular location is the chloroplast thylakoid membrane. Its function is as follows. The light-harvesting complex (LHC) functions as a light receptor, it captures and delivers excitation energy to photosystems with which it is closely associated, here photosystem I. The chain is Photosystem I chlorophyll a/b-binding protein 2, chloroplastic from Arabidopsis thaliana (Mouse-ear cress).